Here is a 486-residue protein sequence, read N- to C-terminus: Regulatory protein ViaA (486 aa).

It belongs to the ViaA family. Homodimer. Interacts with RavA.

It localises to the cytoplasm. In terms of biological role, component of the RavA-ViaA chaperone complex, which may act on the membrane to optimize the function of some of the respiratory chains. ViaA stimulates the ATPase activity of RavA. The protein is Regulatory protein ViaA of Erwinia tasmaniensis (strain DSM 17950 / CFBP 7177 / CIP 109463 / NCPPB 4357 / Et1/99).